We begin with the raw amino-acid sequence, 449 residues long: tRNA(Ile)-lysidine synthase (449 aa).

S35–S40 provides a ligand contact to ATP.

It belongs to the tRNA(Ile)-lysidine synthase family.

Its subcellular location is the cytoplasm. It catalyses the reaction cytidine(34) in tRNA(Ile2) + L-lysine + ATP = lysidine(34) in tRNA(Ile2) + AMP + diphosphate + H(+). Functionally, ligates lysine onto the cytidine present at position 34 of the AUA codon-specific tRNA(Ile) that contains the anticodon CAU, in an ATP-dependent manner. Cytidine is converted to lysidine, thus changing the amino acid specificity of the tRNA from methionine to isoleucine. This is tRNA(Ile)-lysidine synthase from Coxiella burnetii (strain RSA 493 / Nine Mile phase I).